Reading from the N-terminus, the 293-residue chain is 4-hydroxy-tetrahydrodipicolinate synthase (293 aa).

T45 contacts pyruvate. Y133 acts as the Proton donor/acceptor in catalysis. K162 serves as the catalytic Schiff-base intermediate with substrate. I204 contributes to the pyruvate binding site.

This sequence belongs to the DapA family. As to quaternary structure, homotetramer; dimer of dimers.

It is found in the cytoplasm. The enzyme catalyses L-aspartate 4-semialdehyde + pyruvate = (2S,4S)-4-hydroxy-2,3,4,5-tetrahydrodipicolinate + H2O + H(+). It functions in the pathway amino-acid biosynthesis; L-lysine biosynthesis via DAP pathway; (S)-tetrahydrodipicolinate from L-aspartate: step 3/4. In terms of biological role, catalyzes the condensation of (S)-aspartate-beta-semialdehyde [(S)-ASA] and pyruvate to 4-hydroxy-tetrahydrodipicolinate (HTPA). This is 4-hydroxy-tetrahydrodipicolinate synthase from Brucella suis biovar 1 (strain 1330).